Reading from the N-terminus, the 299-residue chain is HTH-type transcriptional regulator CysL (299 aa).

Residues 1–58 (MYYDVLKTFIAVVEEKNFTKAAEKLMISQPSVSLHIKNLEKEFQTALLNRSPKHFTTT) enclose the HTH lysR-type domain. A DNA-binding region (H-T-H motif) is located at residues 18–37 (FTKAAEKLMISQPSVSLHIK).

Belongs to the LysR transcriptional regulatory family.

In terms of biological role, transcriptional activator of the cysJI operon which is involved in sulfur assimilation. Also negatively regulates its own transcription. The chain is HTH-type transcriptional regulator CysL (cysL) from Bacillus subtilis (strain 168).